The sequence spans 339 residues: Anthranilate phosphoribosyltransferase (339 aa).

5-phospho-alpha-D-ribose 1-diphosphate-binding positions include Gly-79, 82–83 (GD), Ser-87, 89–92 (NIST), 107–115 (KHGNRAASS), and Ala-119. Position 79 (Gly-79) interacts with anthranilate. A Mg(2+)-binding site is contributed by Ser-91. Asn-110 contributes to the anthranilate binding site. Arg-165 is an anthranilate binding site. Residues Asp-224 and Glu-225 each contribute to the Mg(2+) site.

This sequence belongs to the anthranilate phosphoribosyltransferase family. Homodimer. Mg(2+) is required as a cofactor.

The enzyme catalyses N-(5-phospho-beta-D-ribosyl)anthranilate + diphosphate = 5-phospho-alpha-D-ribose 1-diphosphate + anthranilate. Its pathway is amino-acid biosynthesis; L-tryptophan biosynthesis; L-tryptophan from chorismate: step 2/5. Functionally, catalyzes the transfer of the phosphoribosyl group of 5-phosphorylribose-1-pyrophosphate (PRPP) to anthranilate to yield N-(5'-phosphoribosyl)-anthranilate (PRA). This is Anthranilate phosphoribosyltransferase from Lactiplantibacillus plantarum (strain ATCC BAA-793 / NCIMB 8826 / WCFS1) (Lactobacillus plantarum).